Consider the following 412-residue polypeptide: Imidazolonepropionase (412 aa).

Fe(3+) is bound by residues H76 and H78. 2 residues coordinate Zn(2+): H76 and H78. Residues R85, Y148, and H181 each contribute to the 4-imidazolone-5-propanoate site. An N-formimidoyl-L-glutamate-binding site is contributed by Y148. Position 242 (H242) interacts with Fe(3+). H242 lines the Zn(2+) pocket. E245 provides a ligand contact to 4-imidazolone-5-propanoate. D317 contacts Fe(3+). Residue D317 coordinates Zn(2+). N-formimidoyl-L-glutamate contacts are provided by N319 and G321. Position 322 (S322) interacts with 4-imidazolone-5-propanoate.

Belongs to the metallo-dependent hydrolases superfamily. HutI family. Zn(2+) is required as a cofactor. The cofactor is Fe(3+).

It is found in the cytoplasm. It carries out the reaction 4-imidazolone-5-propanoate + H2O = N-formimidoyl-L-glutamate. It participates in amino-acid degradation; L-histidine degradation into L-glutamate; N-formimidoyl-L-glutamate from L-histidine: step 3/3. In terms of biological role, catalyzes the hydrolytic cleavage of the carbon-nitrogen bond in imidazolone-5-propanoate to yield N-formimidoyl-L-glutamate. It is the third step in the universal histidine degradation pathway. This Staphylococcus aureus (strain MSSA476) protein is Imidazolonepropionase.